The chain runs to 116 residues: Thioredoxin (116 aa).

In terms of domain architecture, Thioredoxin spans 2–113; that stretch reads TDSEKSATIK…LLRELSDVVP (112 aa). Cysteines 37 and 40 form a disulfide.

It belongs to the thioredoxin family.

Functionally, participates in various redox reactions through the reversible oxidation of its active center dithiol to a disulfide and catalyzes dithiol-disulfide exchange reactions. The polypeptide is Thioredoxin (trxA) (Mycobacterium bovis (strain ATCC BAA-935 / AF2122/97)).